A 273-amino-acid polypeptide reads, in one-letter code: Putative ABC transporter ATP-binding protein DVU_1056 (273 aa).

The ABC transporter domain maps to 10-242; it reads LSLDDIHFTY…IHHGGEVAHE (233 aa). 44–51 contacts ATP; it reads GHNGSGKT. Residues 234–273 form a disordered region; that stretch reads HHGGEVAHEHPSRGCCHQHDGSHHHAGHDDDHPHTSQTTE. A compositionally biased stretch (basic and acidic residues) spans 235-267; that stretch reads HGGEVAHEHPSRGCCHQHDGSHHHAGHDDDHPH.

It belongs to the ABC transporter superfamily.

It is found in the cell inner membrane. Its function is as follows. Probably part of an ABC transporter complex. Responsible for energy coupling to the transport system. The chain is Putative ABC transporter ATP-binding protein DVU_1056 from Nitratidesulfovibrio vulgaris (strain ATCC 29579 / DSM 644 / CCUG 34227 / NCIMB 8303 / VKM B-1760 / Hildenborough) (Desulfovibrio vulgaris).